Reading from the N-terminus, the 567-residue chain is Urease subunit alpha (567 aa).

Residues H134, H136, and K217 each contribute to the Ni(2+) site. The residue at position 217 (K217) is an N6-carboxylysine. A substrate-binding site is contributed by H219. Positions 246 and 272 each coordinate Ni(2+). H320 functions as the Proton donor in the catalytic mechanism. D360 provides a ligand contact to Ni(2+).

This sequence belongs to the metallo-dependent hydrolases superfamily. Urease alpha subunit family. In terms of assembly, heterotrimer of UreA (gamma), UreB (beta) and UreC (alpha) subunits. Three heterotrimers associate to form the active enzyme. Requires Ni cation as cofactor. Post-translationally, carboxylation allows a single lysine to coordinate two nickel ions.

It is found in the cytoplasm. The catalysed reaction is urea + 2 H2O + H(+) = hydrogencarbonate + 2 NH4(+). It functions in the pathway nitrogen metabolism; urea degradation; CO(2) and NH(3) from urea (urease route): step 1/1. The protein is Urease subunit alpha of Pseudomonas putida (strain GB-1).